Here is an 891-residue protein sequence, read N- to C-terminus: MTPMMRQYHEAKEACGDALLFFRMGDFYELFLDDAKVAAGILGLTLTSRDKDSENPTAMAGFPHHQLDQYLQKLIRAGFRAAVCEQVEDPKAAKGLVRREITRVVSAGTLTDEGLLDPKEPNYLAAVFAPSQKAREKAQKEAAKTNDPSGGDVVGIAWAELSSGRFEAGVFPRARLDDELARIGPAEVLHCEDDASVHPDPTATWSWTARPAWSYAAADAEKSLCKQLSVANLEGLGFEDNGDVAIRAAGAVLCYLKETQRGSLDHFRSLTCHNRSPVLQIDAATRRSLEITRTMRTGSREGALLGVIDRTVTPMGSRMLADHLAAPLIDADAITYRTDAVDEFVRNNNLRSDIRTVLGDTYDLTRLLARVATGRTGPRDLRQIAVTLSGLPALKARLAERDSACLTRLESELHLCPELREQLESALNDECPLSAADGNFIREGFDSELDTLRELARGGKRWIAEYQQRQMDETGIANLKVGYNRVFGYYLEVSNAHKDKIPADFIRKQTLKNCERYITPELKEYEEKVLAADEKASSREQMLFTLLRENTHKHLAILQEVANAIAMTDVVASLAEVAAQHHWVRPTLTDDSVLRIEGGRHPVLDVTMAQGEFVPNDCIQSPETGMILLITGPNMAGKSTYIRQVALITLLAQTGSFVPATSAEIGIADRIFARVGASDELSRGQSTFMVEMVETARILNTATSRSLVILDEIGRGTSTYDGLSLAWAITEHLHEQIGARTLFATHYHELAALQETLPRVANLSVAVKEWQDEVVFLHRIVPGSADKSYGIQVARLAGIPVEVNERAKDVLAQLEADHRDSLDRPTIAPPSGVNGKGSGDTYQLTLFGYADHPLIQEIETVDIDSMSPIQAWQFLQEAKAKLSAGPKAVKG.

632-639 contributes to the ATP binding site; it reads GPNMAGKS.

This sequence belongs to the DNA mismatch repair MutS family.

This protein is involved in the repair of mismatches in DNA. It is possible that it carries out the mismatch recognition step. This protein has a weak ATPase activity. This is DNA mismatch repair protein MutS from Rhodopirellula baltica (strain DSM 10527 / NCIMB 13988 / SH1).